A 620-amino-acid chain; its full sequence is MSFDIAKYPTLALVDSTSELRLLPKESLPKLCDELRRYLLDSVSRSSGHFASGLGTVELTVALHYVYNTPFDQLIWDVGHQAYPHKILTGRRDKIGTIRQKGGLHPFPWRGESEYDVLSVGHSSTSISAGIGIAVAAEKEGKDRRTVCVIGDGAITAGMAFEAMNHAGDIKPDMLVILNDNEMSISENVGALNNHLAQLLSGKLYSSLREGGKKVFSGVPPIKELLKRTEEHIKGMVVPGTLFEELGFNYIGPVDGHDVLGLITTLKNMRDLKGPQFLHIMTKKGRGYEPAEKDPITFHAVPKFDPSSGCLPKSSGGLPSYSKIFGDWLCETAAKDSKLMAITPAMREGSGMVEFSRKFPDRYFDVAIAEQHAVTFAAGLAIGGYKPIVAIYSTFLQRAYDQVLHDVAIQKLPVMFAIDRAGIVGADGQTHQGAFDLSYLRCIPEMVIMTPGDENECRQMLYTGYHYNDGPTAVRYPRGNAVGVELTPLEKLPIGKGLVKRQGEKLAILNFGTLLPEAAKVAESLNATLVDMRFVKPLDETLILEMAERHEVLITLEENAIMGGAGSGVNEVLMAHRKVVPVLNIGLPDFFIPQGTQDEARAELGLDAAGIEAKIKDWLA.

Thiamine diphosphate contacts are provided by residues histidine 80 and 121–123 (GHS). Aspartate 152 serves as a coordination point for Mg(2+). Thiamine diphosphate is bound by residues 153–154 (GA), asparagine 181, tyrosine 288, and glutamate 370. Asparagine 181 lines the Mg(2+) pocket.

It belongs to the transketolase family. DXPS subfamily. Homodimer. Requires Mg(2+) as cofactor. The cofactor is thiamine diphosphate.

The enzyme catalyses D-glyceraldehyde 3-phosphate + pyruvate + H(+) = 1-deoxy-D-xylulose 5-phosphate + CO2. Its pathway is metabolic intermediate biosynthesis; 1-deoxy-D-xylulose 5-phosphate biosynthesis; 1-deoxy-D-xylulose 5-phosphate from D-glyceraldehyde 3-phosphate and pyruvate: step 1/1. Functionally, catalyzes the acyloin condensation reaction between C atoms 2 and 3 of pyruvate and glyceraldehyde 3-phosphate to yield 1-deoxy-D-xylulose-5-phosphate (DXP). The polypeptide is 1-deoxy-D-xylulose-5-phosphate synthase (Citrobacter koseri (strain ATCC BAA-895 / CDC 4225-83 / SGSC4696)).